The chain runs to 223 residues: Urease accessory protein UreF (223 aa).

Belongs to the UreF family. As to quaternary structure, ureD, UreF and UreG form a complex that acts as a GTP-hydrolysis-dependent molecular chaperone, activating the urease apoprotein by helping to assemble the nickel containing metallocenter of UreC. The UreE protein probably delivers the nickel.

It is found in the cytoplasm. Required for maturation of urease via the functional incorporation of the urease nickel metallocenter. The sequence is that of Urease accessory protein UreF from Paenarthrobacter aurescens (strain TC1).